Here is a 136-residue protein sequence, read N- to C-terminus: MSSVYRPLVNFIATAMQTVLNLGLLCLGIILIVFLGKETLHLADVLFTPEPTSKYRLVEGLVVYFLYFEFIALIVKYFQSGFHFPLRYFVYIGITAIVRLIIIDHESPMAVLIYSAAILILVITLWLCNSNRLKRE.

Transmembrane regions (helical) follow at residues 15–35, 58–78, 83–103, and 108–128; these read AMQT…IVFL, VEGL…VKYF, HFPL…LIII, and PMAV…LWLC.

Belongs to the PsiE family.

It localises to the cell inner membrane. This chain is Protein PsiE homolog, found in Klebsiella pneumoniae (strain 342).